A 91-amino-acid chain; its full sequence is Small ribosomal subunit protein uS19 (91 aa).

The protein belongs to the universal ribosomal protein uS19 family.

Protein S19 forms a complex with S13 that binds strongly to the 16S ribosomal RNA. This chain is Small ribosomal subunit protein uS19, found in Bordetella pertussis (strain Tohama I / ATCC BAA-589 / NCTC 13251).